Consider the following 109-residue polypeptide: Protein ELF4-LIKE 3 (109 aa).

A disordered region spans residues 88-109 (SMEASSEGDSSEGRGNRRIRPA).

The protein belongs to the EARLY FLOWERING 4 family. As to quaternary structure, homodimer.

The protein localises to the nucleus. Component of the central CCA1/LHY-TOC1 feedback loop in the circadian clock that promotes clock accuracy and is required for sustained rhythms in the absence of daily light/dark cycles. This Arabidopsis thaliana (Mouse-ear cress) protein is Protein ELF4-LIKE 3 (EFL3).